The primary structure comprises 459 residues: Protein YTP1 (459 aa).

The Extracellular segment spans residues 1–6 (MTAANK). Residues 7 to 27 (NIVFGFSRSISAILLICFFFE) traverse the membrane as a helical segment. Topologically, residues 28–59 (KVCGDMEHDMGMDDTSGYTRPEIVQAGSKSFH) are cytoplasmic. Residues 60-80 (WLCTLGFLLLLPSVVTCLSFA) form a helical membrane-spanning segment. The Extracellular portion of the chain corresponds to 81-82 (GR). Residues 83–103 (IYSATLLQCTCAVYAFLEAAV) traverse the membrane as a helical segment. Residues 104-122 (LRFQDNDGVENRTSRGTAW) lie on the Cytoplasmic side of the membrane. The chain crosses the membrane as a helical span at residues 123-143 (FLVGLTWITLFFGGLAGGTGF). Residues 144–170 (LVKSKRLQTFISNAGEKRLSYIHRGLS) are Extracellular-facing. Residues 171–191 (FLTVLTGWVKVCLAPVALFGF) traverse the membrane as a helical segment. Over 192–205 (CREAHTGQCIAHGI) the chain is Cytoplasmic. The chain crosses the membrane as a helical span at residues 206–226 (MGSAFVLYGFIYVLVLVIPWI). Topologically, residues 227 to 266 (RSAQTSYSQDYVDSWVMCIWGVVNTFTEHRWGREGWSVHD) are extracellular. A helical transmembrane segment spans residues 267–287 (YQHTFMGIIWWTGGILGIFLS). The Cytoplasmic portion of the chain corresponds to 288-295 (RNGRRTFV). A helical transmembrane segment spans residues 296-316 (PSLIIIFTGWAMSEHAQHLII). Topologically, residues 317–322 (STKVHN) are extracellular. The helical transmembrane segment at 323–343 (MFGLVLMCGGALRIIEISFLL) threads the bilayer. Over 344–351 (RDKRTLDK) the chain is Cytoplasmic. The chain crosses the membrane as a helical span at residues 352-372 (IHSFQYLAPFCLVCSGLLFMG). At 373–389 (ANEEQLILVLRLGGDHS) the chain is on the extracellular side. The helical transmembrane segment at 390 to 410 (AYVLIIVSGAFLVYFWMIACL) threads the bilayer. The Cytoplasmic portion of the chain corresponds to 411-459 (EFYLYLLEKGKQGFLPKSYELEEENNNVSFELDNISNEDVDEDTTPFNV).

The protein resides in the membrane. The sequence is that of Protein YTP1 (YTP1) from Saccharomyces cerevisiae (strain ATCC 204508 / S288c) (Baker's yeast).